The following is a 205-amino-acid chain: uncharacterized protein (205 aa).

This is an uncharacterized protein from Picosynechococcus sp. (strain ATCC 27264 / PCC 7002 / PR-6) (Agmenellum quadruplicatum).